Consider the following 504-residue polypeptide: Histidine ammonia-lyase (504 aa).

A cross-link (5-imidazolinone (Ala-Gly)) is located at residues 142–144 (ASG). Position 143 is a 2,3-didehydroalanine (Ser) (serine 143).

The protein belongs to the PAL/histidase family. In terms of processing, contains an active site 4-methylidene-imidazol-5-one (MIO), which is formed autocatalytically by cyclization and dehydration of residues Ala-Ser-Gly.

The protein resides in the cytoplasm. The enzyme catalyses L-histidine = trans-urocanate + NH4(+). The protein operates within amino-acid degradation; L-histidine degradation into L-glutamate; N-formimidoyl-L-glutamate from L-histidine: step 1/3. The protein is Histidine ammonia-lyase of Staphylococcus aureus (strain MSSA476).